The sequence spans 310 residues: 4-diphosphocytidyl-2-C-methyl-D-erythritol kinase (310 aa).

K10 is an active-site residue. 102-112 (PVAGGMAGGSA) contributes to the ATP binding site. D144 is an active-site residue. The segment at 289–310 (TRTARGPAAGAQLLPGPVGSFA) is disordered.

This sequence belongs to the GHMP kinase family. IspE subfamily.

It catalyses the reaction 4-CDP-2-C-methyl-D-erythritol + ATP = 4-CDP-2-C-methyl-D-erythritol 2-phosphate + ADP + H(+). It functions in the pathway isoprenoid biosynthesis; isopentenyl diphosphate biosynthesis via DXP pathway; isopentenyl diphosphate from 1-deoxy-D-xylulose 5-phosphate: step 3/6. Functionally, catalyzes the phosphorylation of the position 2 hydroxy group of 4-diphosphocytidyl-2C-methyl-D-erythritol. This chain is 4-diphosphocytidyl-2-C-methyl-D-erythritol kinase, found in Cutibacterium acnes (strain DSM 16379 / KPA171202) (Propionibacterium acnes).